The chain runs to 70 residues: Large ribosomal subunit protein bL31 (70 aa).

4 residues coordinate Zn(2+): cysteine 16, cysteine 18, cysteine 37, and cysteine 40.

It belongs to the bacterial ribosomal protein bL31 family. Type A subfamily. As to quaternary structure, part of the 50S ribosomal subunit. Requires Zn(2+) as cofactor.

Its function is as follows. Binds the 23S rRNA. The polypeptide is Large ribosomal subunit protein bL31 (Shewanella baltica (strain OS223)).